Consider the following 386-residue polypeptide: Methylthioribose-1-phosphate isomerase (386 aa).

The active-site Proton donor is the aspartate 258.

It belongs to the eIF-2B alpha/beta/delta subunits family. MtnA subfamily.

It is found in the cytoplasm. Its subcellular location is the nucleus. The catalysed reaction is 5-(methylsulfanyl)-alpha-D-ribose 1-phosphate = 5-(methylsulfanyl)-D-ribulose 1-phosphate. It functions in the pathway amino-acid biosynthesis; L-methionine biosynthesis via salvage pathway; L-methionine from S-methyl-5-thio-alpha-D-ribose 1-phosphate: step 1/6. Its function is as follows. Catalyzes the interconversion of methylthioribose-1-phosphate (MTR-1-P) into methylthioribulose-1-phosphate (MTRu-1-P). The protein is Methylthioribose-1-phosphate isomerase of Postia placenta (strain ATCC 44394 / Madison 698-R) (Brown rot fungus).